The chain runs to 503 residues: TGF-beta receptor type-1 (503 aa).

Residues 1-29 (MEVAAGAPRSRLLLFVLAATATLAPEATA) form the signal peptide. Over 30–126 (FQCFCHLCTK…PPSGLGPVEL (97 aa)) the chain is Extracellular. 5 disulfides stabilise this stretch: cysteine 32–cysteine 50, cysteine 34–cysteine 37, cysteine 44–cysteine 67, cysteine 82–cysteine 96, and cysteine 97–cysteine 102. Asparagine 41 is a glycosylation site (N-linked (GlcNAc...) asparagine). The helical transmembrane segment at 127-147 (AAVIAGPVCFVCISLMLMVYI) threads the bilayer. At 148–503 (CHNRTVIHHR…QLSQQEGIKM (356 aa)) the chain is on the cytoplasmic side. A Phosphoserine modification is found at serine 165. The GS domain occupies 175 to 204 (TTLKDLIYDMTTSGSGSGLPLLVQRTIART). Phosphothreonine; by TGFBR2 is present on residues threonine 185 and threonine 186. Phosphoserine; by TGFBR2 is present on residues serine 187, serine 189, and serine 191. The FKBP1A-binding signature appears at 193-194 (LP). In terms of domain architecture, Protein kinase spans 205–495 (IVLQESIGKG…LRIKKTLSQL (291 aa)). ATP is bound by residues 211–219 (IGKGRFGEV) and lysine 232. Residue aspartate 333 is the Proton acceptor of the active site. Lysine 391 is covalently cross-linked (Glycyl lysine isopeptide (Lys-Gly) (interchain with G-Cter in SUMO)).

The protein belongs to the protein kinase superfamily. TKL Ser/Thr protein kinase family. TGFB receptor subfamily. As to quaternary structure, homodimer; in the endoplasmic reticulum but also at the cell membrane. Heterohexamer; TGFB1, TGFB2 and TGFB3 homodimeric ligands assemble a functional receptor composed of two TGFBR1 and TGFBR2 heterodimers to form a ligand-receptor heterohexamer. The respective affinity of TGBRB1 and TGFBR2 for the ligands may modulate the kinetics of assembly of the receptor and may explain the different biological activities of TGFB1, TGFB2 and TGFB3. Component of a complex composed of TSC22D1 (via N-terminus), TGFBR1 and TGFBR2; the interaction between TSC22D1 and TGFBR1 is inhibited by SMAD7 and promoted by TGFB1. Interacts with CD109; inhibits TGF-beta receptor activation in keratinocytes. Interacts with RBPMS. Interacts (unphosphorylated) with FKBP1A; prevents TGFBR1 phosphorylation by TGFBR2 and stabilizes it in the inactive conformation. Interacts with SMAD2, SMAD3 and ZFYVE9; ZFYVE9 recruits SMAD2 and SMAD3 to the TGF-beta receptor. Interacts with TRAF6 and MAP3K7; induces MAP3K7 activation by TRAF6. Interacts with PARD6A; involved in TGF-beta induced epithelial to mesenchymal transition. Interacts with NEDD4L. Interacts with SMAD7, SMURF1 and SMURF2; SMAD7 recruits NEDD4L, SMURF1 and SMURF2 to the TGF-beta receptor. Interacts with USP15 and VPS39. Interacts with SDCBP (via C-terminus). Interacts with CAV1 and this interaction is impaired in the presence of SDCBP. Interacts with APPL1; interaction is TGF beta dependent; mediates trafficking of the TGFBR1 from the endosomes to the nucleus via microtubules in a TRAF6-dependent manner. Interacts with GPR50; this interaction promotes the constitutive activation of SMAD signaling pathway. Mg(2+) serves as cofactor. The cofactor is Mn(2+). In terms of processing, phosphorylated at basal levels in the absence of ligand. Activated upon phosphorylation by TGFBR2, mainly in the GS domain. Phosphorylation in the GS domain abrogates FKBP1A-binding. Post-translationally, N-Glycosylated. Ubiquitinated; undergoes ubiquitination catalyzed by several E3 ubiquitin ligases including SMURF1, SMURF2 and NEDD4L2. Results in the proteasomal and/or lysosomal degradation of the receptor thereby negatively regulating its activity. Deubiquitinated by USP15, leading to stabilization of the protein and enhanced TGF-beta signal. Its ubiquitination and proteasome-mediated degradation is negatively regulated by SDCBP.

The protein resides in the cell membrane. It localises to the cell junction. The protein localises to the tight junction. It is found in the membrane raft. Its subcellular location is the cell surface. It catalyses the reaction L-threonyl-[receptor-protein] + ATP = O-phospho-L-threonyl-[receptor-protein] + ADP + H(+). It carries out the reaction L-seryl-[receptor-protein] + ATP = O-phospho-L-seryl-[receptor-protein] + ADP + H(+). Its activity is regulated as follows. Kept in an inactive conformation by FKBP1A preventing receptor activation in absence of ligand. CD109 is another inhibitor of the receptor. Functionally, transmembrane serine/threonine kinase forming with the TGF-beta type II serine/threonine kinase receptor, TGFBR2, the non-promiscuous receptor for the TGF-beta cytokines TGFB1, TGFB2 and TGFB3. Transduces the TGFB1, TGFB2 and TGFB3 signal from the cell surface to the cytoplasm and is thus regulating a plethora of physiological and pathological processes including cell cycle arrest in epithelial and hematopoietic cells, control of mesenchymal cell proliferation and differentiation, wound healing, extracellular matrix production, immunosuppression and carcinogenesis. The formation of the receptor complex composed of 2 TGFBR1 and 2 TGFBR2 molecules symmetrically bound to the cytokine dimer results in the phosphorylation and the activation of TGFBR1 by the constitutively active TGFBR2. Activated TGFBR1 phosphorylates SMAD2 which dissociates from the receptor and interacts with SMAD4. The SMAD2-SMAD4 complex is subsequently translocated to the nucleus where it modulates the transcription of the TGF-beta-regulated genes. This constitutes the canonical SMAD-dependent TGF-beta signaling cascade. Also involved in non-canonical, SMAD-independent TGF-beta signaling pathways. For instance, TGFBR1 induces TRAF6 autoubiquitination which in turn results in MAP3K7 ubiquitination and activation to trigger apoptosis. Also regulates epithelial to mesenchymal transition through a SMAD-independent signaling pathway through PARD6A phosphorylation and activation. The polypeptide is TGF-beta receptor type-1 (TGFBR1) (Sus scrofa (Pig)).